The chain runs to 1906 residues: DENN domain-containing protein 4C (1906 aa).

The 160-residue stretch at 40-199 (KAPITDIAVI…NVFLCYKKSV (160 aa)) folds into the MABP domain. One can recognise a uDENN domain in the interval 191–363 (VFLCYKKSVP…NIPFPSPQRP (173 aa)). In terms of domain architecture, cDENN spans 384-520 (PLPLSGANFS…PCKSLLGTLR (137 aa)). The dDENN domain maps to 522 to 640 (LYQQLCSVHR…CSFVSDKDTG (119 aa)). A phosphoserine mark is found at Ser702, Ser736, and Ser740. A PPR repeat occupies 818 to 852 (DEVCYRVVMQLCGLWVNPVLAVRVLFEMKTARIKP). Residues 904–917 (SQVFSISGGQSDQG) are compositionally biased toward polar residues. Disordered regions lie at residues 904–942 (SQVFSISGGQSDQGYGSKDELVKEGADGHAPEEHTPPEL) and 963–984 (LQPTPEPQSPTEPPAWGSSIVK). Over residues 920-939 (SKDELVKEGADGHAPEEHTP) the composition is skewed to basic and acidic residues. Residue Thr966 is modified to Phosphothreonine. Residues 966 to 975 (TPEPQSPTEP) show a composition bias toward pro residues. Ser971 carries the phosphoserine modification. Thr973 carries the post-translational modification Phosphothreonine. A phosphoserine mark is found at Ser987, Ser1000, Ser1043, Ser1058, Ser1096, and Ser1123. The segment covering 1154 to 1171 (NSLQSNSHSDQSRDTQAG) has biased composition (polar residues). The segment at 1154-1184 (NSLQSNSHSDQSRDTQAGAQDPVNKRSSSYA) is disordered. 5 positions are modified to phosphoserine: Ser1181, Ser1221, Ser1240, Ser1248, and Ser1274. A disordered region spans residues 1246 to 1317 (SCSMELHGEG…PQSPYRAYKD (72 aa)). The span at 1281–1291 (PPARDSTETEK) shows a compositional bias: basic and acidic residues. Residues 1292 to 1302 (SSPAVSSSKTL) show a composition bias toward polar residues. 3 positions are modified to phosphoserine: Ser1321, Ser1333, and Ser1342. Disordered stretches follow at residues 1410–1440 (SPNTSVSGLVPSELTQSNTSLGSSSSSGDVG), 1548–1577 (STSGDSLQSGSIPSASEPSEHKPTSSSAEP), and 1596–1628 (ASYTVESSDEIKKTNGDVQSVKMSSVPNSLSKR). Positions 1423–1437 (LTQSNTSLGSSSSSG) are enriched in low complexity. Polar residues-rich tracts occupy residues 1548–1564 (STSGDSLQSGSIPSASE) and 1611–1628 (GDVQSVKMSSVPNSLSKR). A phosphoserine mark is found at Ser1620, Ser1624, Ser1626, Ser1637, and Ser1796.

Post-translationally, phosphorylated in response to insulin.

The protein resides in the cytoplasmic vesicle membrane. Its subcellular location is the cell membrane. It localises to the cytoplasm. The protein localises to the cytosol. In terms of biological role, guanine nucleotide exchange factor (GEF) activating RAB10. Promotes the exchange of GDP to GTP, converting inactive GDP-bound RAB10 into its active GTP-bound form. Thereby, stimulates SLC2A4/GLUT4 glucose transporter-enriched vesicles delivery to the plasma membrane in response to insulin. The chain is DENN domain-containing protein 4C (Dennd4c) from Mus musculus (Mouse).